The following is a 217-amino-acid chain: Protein-methionine-sulfoxide reductase heme-binding subunit MsrQ (217 aa).

The next 4 membrane-spanning stretches (helical) occupy residues 82 to 102 (MLGLYTFFYGTLHFLIWLLVD), 118 to 138 (PFITVGFAAFVLMIPLAATST), 150 to 170 (WQWLHRLVYVTGVLGILHYWW), and 180 to 200 (EVSIYAAVMAVLLGLRVWWVW).

Belongs to the MsrQ family. In terms of assembly, heterodimer of a catalytic subunit (MsrP) and a heme-binding subunit (MsrQ). The cofactor is FMN. Heme b serves as cofactor.

Its subcellular location is the cell inner membrane. Its function is as follows. Part of the MsrPQ system that repairs oxidized periplasmic proteins containing methionine sulfoxide residues (Met-O), using respiratory chain electrons. Thus protects these proteins from oxidative-stress damage caused by reactive species of oxygen and chlorine generated by the host defense mechanisms. MsrPQ is essential for the maintenance of envelope integrity under bleach stress, rescuing a wide series of structurally unrelated periplasmic proteins from methionine oxidation. MsrQ provides electrons for reduction to the reductase catalytic subunit MsrP, using the quinone pool of the respiratory chain. This chain is Protein-methionine-sulfoxide reductase heme-binding subunit MsrQ, found in Ralstonia nicotianae (strain ATCC BAA-1114 / GMI1000) (Ralstonia solanacearum).